We begin with the raw amino-acid sequence, 109 residues long: Protein reprimo (109 aa).

Asn-7 and Asn-18 each carry an N-linked (GlcNAc...) asparagine glycan. Residues 56–76 traverse the membrane as a helical segment; sequence VVQIAVMCVLSLTVVFGIFFL. Phosphoserine is present on Ser-98.

Belongs to the reprimo family.

It is found in the cytoplasm. Its subcellular location is the membrane. Functionally, may be involved in the regulation of p53-dependent G2 arrest of the cell cycle. Seems to induce cell cycle arrest by inhibiting CDK1 activity and nuclear translocation of the CDC2 cyclin B1 complex. The sequence is that of Protein reprimo (Rprm) from Rattus norvegicus (Rat).